A 1890-amino-acid chain; its full sequence is Proteasome-associated protein ECM29 homolog (1890 aa).

HEAT repeat units lie at residues 6–29 (NAEI…EKLE), 30–67 (AAVG…RLSS), 130–167 (DKLF…ICAN), 226–263 (FSDL…MLDF), 294–330 (RVRQ…TNTN), 334–354 (KVLA…ELVS), 355–395 (KVSK…SFPQ), 459–496 (GQQH…EYYA), 498–523 (ARYL…LYGT), 524–561 (SKKD…EQRR), 565–602 (PSFQ…SLEV), 685–722 (AKQL…FGLS), 776–813 (PQFV…AVEI), 843–882 (STKL…GDGE), 938–975 (DDFD…HCSQ), 980–1018 (LAKK…ISDS), 1118–1155 (PYLG…DSKE), and 1159–1196 (RYYW…RPNG). A Phosphoserine modification is found at serine 1213. HEAT repeat units lie at residues 1271–1309 (AVAS…SSGS), 1313–1350 (PHLA…AQEA), 1378–1415 (SVLE…IRLG), 1416–1457 (KEMT…LAKE), 1497–1534 (DYMD…DVSP), 1541–1578 (LNLN…RLSS), 1583–1620 (PDRL…GLDR), and 1623–1660 (QICS…QLEA). Residues 1680-1702 (RKESDDEDEPNTSQELSADERNK) form a disordered region. Serine 1683 carries the post-translational modification Phosphoserine. Threonine 1691 carries the post-translational modification Phosphothreonine. Serine 1692 carries the phosphoserine modification. 2 HEAT repeats span residues 1751-1788 (PVQV…EKKI) and 1826-1863 (KEAL…NLEK).

Associated with the proteasome.

It localises to the cytoplasm. The polypeptide is Proteasome-associated protein ECM29 homolog (Drosophila melanogaster (Fruit fly)).